A 197-amino-acid polypeptide reads, in one-letter code: Imidazoleglycerol-phosphate dehydratase (197 aa).

It belongs to the imidazoleglycerol-phosphate dehydratase family.

It is found in the cytoplasm. It catalyses the reaction D-erythro-1-(imidazol-4-yl)glycerol 3-phosphate = 3-(imidazol-4-yl)-2-oxopropyl phosphate + H2O. It participates in amino-acid biosynthesis; L-histidine biosynthesis; L-histidine from 5-phospho-alpha-D-ribose 1-diphosphate: step 6/9. The sequence is that of Imidazoleglycerol-phosphate dehydratase from Rhodopseudomonas palustris (strain BisA53).